Here is a 417-residue protein sequence, read N- to C-terminus: Gamma-glutamyl phosphate reductase (417 aa).

The protein belongs to the gamma-glutamyl phosphate reductase family.

It is found in the cytoplasm. The enzyme catalyses L-glutamate 5-semialdehyde + phosphate + NADP(+) = L-glutamyl 5-phosphate + NADPH + H(+). The protein operates within amino-acid biosynthesis; L-proline biosynthesis; L-glutamate 5-semialdehyde from L-glutamate: step 2/2. Functionally, catalyzes the NADPH-dependent reduction of L-glutamate 5-phosphate into L-glutamate 5-semialdehyde and phosphate. The product spontaneously undergoes cyclization to form 1-pyrroline-5-carboxylate. This is Gamma-glutamyl phosphate reductase from Cronobacter sakazakii (strain ATCC BAA-894) (Enterobacter sakazakii).